Reading from the N-terminus, the 68-residue chain is Large ribosomal subunit protein eL24 (68 aa).

Positions 7, 10, 33, and 37 each coordinate Zn(2+). Residues 7-37 (CSYCGREFEPGTGKMFVRNDGRVLFFCSSKC) form a C4-type zinc finger.

This sequence belongs to the eukaryotic ribosomal protein eL24 family. In terms of assembly, part of the 50S ribosomal subunit. Forms a cluster with proteins L3 and L14. Zn(2+) serves as cofactor.

Binds to the 23S rRNA. This Thermococcus onnurineus (strain NA1) protein is Large ribosomal subunit protein eL24.